Here is a 183-residue protein sequence, read N- to C-terminus: Large ribosomal subunit protein eL18 (183 aa).

The disordered stretch occupies residues 150 to 183 (RHFGPAPGAPRSHTKPYVRTKGHEKARPSRRANV).

Belongs to the eukaryotic ribosomal protein eL18 family.

It localises to the cytoplasm. The sequence is that of Large ribosomal subunit protein eL18 (RpL18) from Bombyx mori (Silk moth).